We begin with the raw amino-acid sequence, 902 residues long: Cytosolic 10-formyltetrahydrofolate dehydrogenase (902 aa).

The segment at 1-310 is hydrolase domain; that stretch reads MKIAVIGQSL…LASNFFKGAA (310 aa). At serine 9 the chain carries Phosphoserine. Position 38 is an N6-succinyllysine (lysine 38). 88–90 contributes to the (6R)-10-formyltetrahydrofolate binding site; the sequence is QFI. Histidine 106 acts as the Proton donor in catalysis. A (6R)-10-formyltetrahydrofolate-binding site is contributed by aspartate 142. In terms of domain architecture, Carrier spans 318-395; it reads EAELVTAEAV…DFIQLLVRKL (78 aa). An O-(pantetheine 4'-phosphoryl)serine modification is found at serine 354. Positions 417–902 are aldehyde dehydrogenase domain; that stretch reads TVRMPHQLFI…LRVKTVTFEY (486 aa). NADP(+)-binding positions include 571–573 and 597–600; these read IPW and KPAQ. A phosphoserine mark is found at serine 629 and serine 631. Residues 630-635 and 650-651 each bind NADP(+); these read GSLVGQ and GS. At lysine 660 the chain carries N6-succinyllysine. Residue glutamate 673 is the Proton acceptor of the active site. An NADP(+)-binding site is contributed by 673–674; sequence EL. Cysteine 707 serves as the catalytic Proton donor. An NADP(+)-binding site is contributed by lysine 757. Lysine 767 carries the N6-succinyllysine modification. Residue 804–806 coordinates NADP(+); it reads ESF. The residue at position 825 (serine 825) is a Phosphoserine. Lysine 882 carries the post-translational modification N6-acetyllysine.

This sequence in the N-terminal section; belongs to the GART family. In the C-terminal section; belongs to the aldehyde dehydrogenase family. ALDH1L subfamily. In terms of assembly, homotetramer. Post-translationally, phosphopantetheinylation at Ser-354 by AASDHPPT is required for the formyltetrahydrofolate dehydrogenase activity. In terms of tissue distribution, highly expressed in liver, pancreas and kidney.

It localises to the cytoplasm. The protein resides in the cytosol. It carries out the reaction (6R)-10-formyltetrahydrofolate + NADP(+) + H2O = (6S)-5,6,7,8-tetrahydrofolate + CO2 + NADPH + H(+). Its function is as follows. Cytosolic 10-formyltetrahydrofolate dehydrogenase that catalyzes the NADP(+)-dependent conversion of 10-formyltetrahydrofolate to tetrahydrofolate and carbon dioxide. May also have an NADP(+)-dependent aldehyde dehydrogenase activity towards formaldehyde, acetaldehyde, propionaldehyde, and benzaldehyde. This is Cytosolic 10-formyltetrahydrofolate dehydrogenase from Homo sapiens (Human).